Consider the following 57-residue polypeptide: Stress response protein (57 aa).

The Nuclear localization signal signature appears at 6–10 (RKERR).

In terms of tissue distribution, mesophyll protoplasts.

The protein resides in the nucleus. In terms of biological role, stress response. May play a role in the reentering of protoplasts into the cell cycle. This chain is Stress response protein, found in Nicotiana sylvestris (Wood tobacco).